The sequence spans 262 residues: Small ribosomal subunit protein uS2 (262 aa).

This sequence belongs to the universal ribosomal protein uS2 family.

The protein is Small ribosomal subunit protein uS2 of Roseiflexus sp. (strain RS-1).